Reading from the N-terminus, the 455-residue chain is Catalase-like protein (455 aa).

The disordered stretch occupies residues 1–25; the sequence is MSQQDKKLTGVFGHPVSDRENSMTA.

The protein belongs to the catalase family.

Catalytically inactive. The polypeptide is Catalase-like protein (katB) (Staphylococcus aureus).